Reading from the N-terminus, the 325-residue chain is MPAAHSESMNKTKIAKIAFPIAALLCFFPFVSSAAALVLGIVLAVALGNPYVDKTRSYTHHLLSLSVIGLGAGMDLMVVGRVGLQGIGYTVVGISFTLLLGMLIGRMLKIERDTSTLITVGTAICGGSAIAAVAPTIRAKSHEVSVALGTVFMLNACALVIFPWIGHLLNLTQTQFGLWSALAIHDTSSVVGSTLQYGPESLQVGTTVKLARALWIVPVTFLIGLFYFRGQKVEGGAGKAKKPWFILGFLIAAALVTWIPELRPVGHVVETVAKRALVVTLFLIGANLTKETLKSVGIKPFLQGVGLWIVVASCTLGAILIGWIH.

8 helical membrane-spanning segments follow: residues 21–43 (IAALLCFFPFVSSAAALVLGIVL), 58–80 (YTHHLLSLSVIGLGAGMDLMVVG), 87–105 (IGYTVVGISFTLLLGMLIG), 115–137 (STLITVGTAICGGSAIAAVAPTI), 144–166 (VSVALGTVFMLNACALVIFPWIG), 211–230 (ARALWIVPVTFLIGLFYFRG), 243–260 (PWFILGFLIAAALVTWIP), and 302–324 (LQGVGLWIVVASCTLGAILIGWI).

The protein belongs to the UPF0324 family.

It is found in the cell membrane. This chain is UPF0324 membrane protein Bd1437, found in Bdellovibrio bacteriovorus (strain ATCC 15356 / DSM 50701 / NCIMB 9529 / HD100).